We begin with the raw amino-acid sequence, 593 residues long: MSYSKSTIYRRQGTEPNSHFRRTVEEKSQLSGTNEESLGGHTLSSNAFKNNSSSISPSSSAKDPREQRKRTFPLNDTHSSRARQHERPFRSRKSRRRKGKKAFSPRPGSPPSPSFYRSGSQKRARNLTTKDYFAKRSESSSSASVSPISPSANRNDSKRQASSFRRSPPSSVHMKPSAFNGRKVSRRPSSSPPPIPSIPHETTSSDTQKKSSVSSGFPENKHGKFHFHIPNERRSRFDQPPSKRMALTSTARESVPAPLPSPPSGPIYTYTYPKPAYEKIDQIGEGTYGKVYKAINTVTGDLVALKRIRLEQEKDGFPITTVREVKILQRLRHKNIVRLLEIMVEKSSVYMVFEYMDHDLTGVLLNSQLHFTPGNIKHLSKQIFEALAYLHHRGVLHRDIKGSNILLNNNGDLKFADFGLARFNTSSKSANYTNRVITLWFRPPELLLGETAYDTAVDIWSAGCIVMELFTGKPFFQGRDEISQLEVIYDMMGTPDVHSWPEVKNLPWYELLKPVEEKKSRFVETFKEILSPAAIDLCQKLLALNPFCRPSAHETLMHEYFTSESPPPEPAVILKNMQGSWHEWESKKRKSKR.

Composition is skewed to polar residues over residues 1–17 (MSYSKSTIYRRQGTEPN) and 29–51 (QLSGTNEESLGGHTLSSNAFKNN). The interval 1–262 (MSYSKSTIYR…ESVPAPLPSP (262 aa)) is disordered. Residues serine 56 and serine 58 each carry the phosphoserine modification. Over residues 90–103 (RSRKSRRRKGKKAF) the composition is skewed to basic residues. Serine 104 and serine 109 each carry phosphoserine. Residues 139–152 (SSSSASVSPISPSA) are compositionally biased toward low complexity. The span at 160-170 (QASSFRRSPPS) shows a compositional bias: polar residues. The span at 198 to 215 (IPHETTSSDTQKKSSVSS) shows a compositional bias: low complexity. A Protein kinase domain is found at 277-561 (YEKIDQIGEG…AHETLMHEYF (285 aa)). Residues 283-291 (IGEGTYGKV) and lysine 306 each bind ATP. Aspartate 399 acts as the Proton acceptor in catalysis.

This sequence belongs to the protein kinase superfamily. CMGC Ser/Thr protein kinase family. CDC2/CDKX subfamily. CTDK-I consists of three subunits, ctk1/lsk1, ctk2/lsc1 and ctk3 (also called alpha, beta and gamma). Interacts with ctk2/lsc1. This interaction is dependent on kinase activity.

It is found in the nucleus. The protein localises to the nucleolus. It carries out the reaction [DNA-directed RNA polymerase] + ATP = phospho-[DNA-directed RNA polymerase] + ADP + H(+). Catalytic subunit of the CTDK-I complex, which hyperphosphorylates the C-terminal heptapeptide repeat domain (CTD) of the largest RNA polymerase II subunit. Involved in RNA polymerase II transcriptional elongation and pre-mRNA 3'-end processing. Together with ctk2/lsc1, required for the regulation of cytokinesis by phosphorylating 'Ser-2' residues found in the heptad repeats of the CTD. Required for nuclear localization of ctk2/lsc1. Positively regulates the septation initiation network (SIN) and promotes successful completion of cytokinesis in response to perturbation of the actomyosin ring. Acts in parallel to clp1 to promote actomyosin ring stability upon cytokinesis checkpoint activation. The chain is CTD kinase subunit alpha from Schizosaccharomyces pombe (strain 972 / ATCC 24843) (Fission yeast).